The following is a 212-amino-acid chain: Nucleoredoxin-like protein 1 (212 aa).

Residues 1–164 (MASLFSGRIL…AAEVLDRNFQ (164 aa)) enclose the Thioredoxin domain. The interval 191 to 212 (AARGGRDPGGGGGEEGGAGGLF) is disordered. Residues 197 to 212 (DPGGGGGEEGGAGGLF) are compositionally biased toward gly residues.

The protein belongs to the nucleoredoxin family. Interacts with isoform 1 of BSG.

The protein localises to the cell projection. It localises to the cilium. The protein resides in the photoreceptor outer segment. Functionally, plays an important role in retinal cone photoreceptor survival. In association with glucose transporter SLC16A1/GLUT1 and BSG, promotes retinal cone survival by enhancing aerobic glycolysis and accelerating the entry of glucose into photoreceptors. May play a role in cone cell viability, slowing down cone degeneration, does not seem to play a role in degenerating rods. This is Nucleoredoxin-like protein 1 (NXNL1) from Homo sapiens (Human).